The primary structure comprises 358 residues: Peptide chain release factor 1 (358 aa).

The residue at position 235 (Gln-235) is an N5-methylglutamine.

This sequence belongs to the prokaryotic/mitochondrial release factor family. In terms of processing, methylated by PrmC. Methylation increases the termination efficiency of RF1.

Its subcellular location is the cytoplasm. Its function is as follows. Peptide chain release factor 1 directs the termination of translation in response to the peptide chain termination codons UAG and UAA. This is Peptide chain release factor 1 from Neisseria gonorrhoeae (strain NCCP11945).